The following is a 2368-amino-acid chain: Highly reducing polyketide synthase cla2 (2368 aa).

The 425-residue stretch at 10-434 folds into the Ketosynthase family 3 (KS3) domain; sequence QIPIAIVGLG…GTNGLVVLEA (425 aa). Active-site for beta-ketoacyl synthase activity residues include cysteine 182, histidine 317, and histidine 357. A malonyl-CoA:ACP transacylase (MAT) domain region spans residues 548–877; sequence FVFTGQGAQW…RGQNALDTSL (330 aa). Serine 638 serves as the catalytic For malonyltransferase activity. The tract at residues 936-1071 is N-terminal hotdog fold; that stretch reads HSMIGLKQPM…GLVAIEYTNK (136 aa). The tract at residues 936–1175 is dehydratase (DH) domain; sequence HSMIGLKQPM…AIFQSIFGST (240 aa). Positions 936-1255 constitute a PKS/mFAS DH domain; it reads HSMIGLKQPM…MTEPEVGDDA (320 aa). Histidine 968 (proton acceptor; for dehydratase activity) is an active-site residue. Positions 1099–1255 are C-terminal hotdog fold; the sequence is PLMIRREKFY…MTEPEVGDDA (157 aa). Catalysis depends on aspartate 1165, which acts as the Proton donor; for dehydratase activity. The interval 1655-1967 is enoylreductase (ER) domain; sequence GFLDSLQFIK…QGKHRGKLVL (313 aa). Residues 1991–2170 form a catalytic ketoreductase (KRc) domain region; the sequence is ATYLIIGGLG…AVAVNLTIIR (180 aa). The 78-residue stretch at 2283-2360 folds into the Carrier domain; the sequence is QASEIITEGL…VLAKTIASRS (78 aa). Serine 2320 carries the O-(pantetheine 4'-phosphoryl)serine modification.

It participates in secondary metabolite biosynthesis. Highly reducing polyketide synthase; part of the gene cluster that mediates the biosynthesis of cladosporin, a tricyclic octaketide that acts as an antimalarial agent though inhibition of the Plasmodium falciparum lysyl-tRNA synthetase. The highly reducing polyketide synthase cla2 is responsible for biosynthesis up to the pentaketide stage, including of the tetrahydropyran (THP) ring, whereas the three subsequent ketide extensions with no reduction are catalyzed by the non-reducing polyketide synthase cla3. This is Highly reducing polyketide synthase cla2 from Cladosporium cladosporioides.